We begin with the raw amino-acid sequence, 194 residues long: Anthranilate synthase component 2 (194 aa).

In terms of domain architecture, Glutamine amidotransferase type-1 spans 2 to 194 (KIFFIDNFDS…QSVGFLRELS (193 aa)). 57–59 (GPG) is an L-glutamine binding site. C84 serves as the catalytic Nucleophile; for GATase activity. Residues Q88 and 134 to 135 (SL) contribute to the L-glutamine site. Catalysis depends on for GATase activity residues H170 and E172.

Heterotetramer consisting of two non-identical subunits: a beta subunit (TrpG) and a large alpha subunit (TrpE).

The enzyme catalyses chorismate + L-glutamine = anthranilate + pyruvate + L-glutamate + H(+). Its pathway is amino-acid biosynthesis; L-tryptophan biosynthesis; L-tryptophan from chorismate: step 1/5. Part of a heterotetrameric complex that catalyzes the two-step biosynthesis of anthranilate, an intermediate in the biosynthesis of L-tryptophan. In the first step, the glutamine-binding beta subunit (TrpG) of anthranilate synthase (AS) provides the glutamine amidotransferase activity which generates ammonia as a substrate that, along with chorismate, is used in the second step, catalyzed by the large alpha subunit of AS (TrpE) to produce anthranilate. In the absence of TrpG, TrpE can synthesize anthranilate directly from chorismate and high concentrations of ammonia. In Helicobacter pylori (strain J99 / ATCC 700824) (Campylobacter pylori J99), this protein is Anthranilate synthase component 2 (trpG).